The primary structure comprises 236 residues: MINNQESLRSQTFFCIKYIISLSFFFILIYQLLNFLVLRPYAEYLWNHYQTDVFLNSSQEERIFAKLQNFEEEMQFDMLISYTYPLNPQVLHKEMEEKAFELAHMSNNESINSIAHVFTDLLIAFLIFCLLINAKKEIAIIQTYIDQYIYSLTDAKKSFFLILFTDIFVGFHSSHGWKILIELCLTHLGLPENKGFIFLFVATFPVILDTLFKYWIFLYLNRISPSAVATFNNMNE.

4 helical membrane passes run 18-38 (YIISLSFFFILIYQLLNFLVL), 114-134 (IAHVFTDLLIAFLIFCLLINA), 161-181 (LILFTDIFVGFHSSHGWKILI), and 196-216 (FIFLFVATFPVILDTLFKYWI).

Belongs to the CemA family.

Its subcellular location is the plastid. The protein localises to the chloroplast inner membrane. It carries out the reaction K(+)(in) + H(+)(out) = K(+)(out) + H(+)(in). Its function is as follows. Contributes to K(+)/H(+) antiport activity by supporting proton efflux to control proton extrusion and homeostasis in chloroplasts in a light-dependent manner to modulate photosynthesis. Prevents excessive induction of non-photochemical quenching (NPQ) under continuous-light conditions. Indirectly promotes efficient inorganic carbon uptake into chloroplasts. The protein is Potassium/proton antiporter CemA of Mesostigma viride (Green alga).